Reading from the N-terminus, the 185-residue chain is Elongation factor P (185 aa).

Belongs to the elongation factor P family.

Its subcellular location is the cytoplasm. It functions in the pathway protein biosynthesis; polypeptide chain elongation. Involved in peptide bond synthesis. Stimulates efficient translation and peptide-bond synthesis on native or reconstituted 70S ribosomes in vitro. Probably functions indirectly by altering the affinity of the ribosome for aminoacyl-tRNA, thus increasing their reactivity as acceptors for peptidyl transferase. The sequence is that of Elongation factor P from Thermosynechococcus vestitus (strain NIES-2133 / IAM M-273 / BP-1).